The sequence spans 347 residues: Protein RecA (347 aa).

Position 64–71 (64–71 (GPESSGKT)) interacts with ATP.

Belongs to the RecA family.

The protein localises to the cytoplasm. Functionally, can catalyze the hydrolysis of ATP in the presence of single-stranded DNA, the ATP-dependent uptake of single-stranded DNA by duplex DNA, and the ATP-dependent hybridization of homologous single-stranded DNAs. It interacts with LexA causing its activation and leading to its autocatalytic cleavage. In Bartonella tribocorum (strain CIP 105476 / IBS 506), this protein is Protein RecA.